A 530-amino-acid polypeptide reads, in one-letter code: Cytochrome P450 2U1 (530 aa).

4 helical membrane passes run leucine 21–tryptophan 41, valine 99–phenylalanine 119, isoleucine 247–phenylalanine 267, and leucine 328–leucine 348. Cysteine 476 lines the heme pocket. A helical transmembrane segment spans residues leucine 481–leucine 501.

Belongs to the cytochrome P450 family. It depends on heme as a cofactor. In terms of tissue distribution, specifically expressed in thymus and brain. In brain, expressed in cortex, cerebellum, olfactory bulbs, pons and medulla and the limbic structures (at protein level).

The protein localises to the endoplasmic reticulum membrane. It localises to the microsome membrane. The protein resides in the mitochondrion inner membrane. It carries out the reaction an omega-methyl-long-chain fatty acid + reduced [NADPH--hemoprotein reductase] + O2 = an omega-hydroxy-long-chain fatty acid + oxidized [NADPH--hemoprotein reductase] + H2O + H(+). It catalyses the reaction (5Z,8Z,11Z,14Z)-eicosatetraenoate + reduced [NADPH--hemoprotein reductase] + O2 = 19-hydroxy-(5Z,8Z,11Z,14Z)-eicosatetraenoate + oxidized [NADPH--hemoprotein reductase] + H2O + H(+). The catalysed reaction is (5Z,8Z,11Z,14Z)-eicosatetraenoate + reduced [NADPH--hemoprotein reductase] + O2 = 20-hydroxy-(5Z,8Z,11Z,14Z)-eicosatetraenoate + oxidized [NADPH--hemoprotein reductase] + H2O + H(+). The enzyme catalyses N-[(5Z,8Z,11Z,14Z)-eicosatetraenoyl]-serotonin + reduced [NADPH--hemoprotein reductase] + O2 = 2-oxo-N-[(5Z,8Z,11Z,14Z)-eicosatetraenoyl]-serotonin + oxidized [NADPH--hemoprotein reductase] + H2O + H(+). Its function is as follows. A cytochrome P450 monooxygenase involved in the metabolism of arachidonic acid and its conjugates. Mechanistically, uses molecular oxygen inserting one oxygen atom into a substrate, and reducing the second into a water molecule, with two electrons provided by NADPH via cytochrome P450 reductase (CPR; NADPH-ferrihemoprotein reductase). Acts as an omega and omega-1 hydroxylase for arachidonic acid and possibly for other long chain fatty acids. May modulate the arachidonic acid signaling pathway and play a role in other fatty acid signaling processes. May down-regulate the biological activities of N-arachidonoyl-serotonin, an endocannabinoid that has anti-nociceptive effects through inhibition of fatty acid amide hydrolase FAAH, TRPV1 receptor and T-type calcium channels. Catalyzes C-2 oxidation of the indole ring of N-arachidonoyl-serotonin forming a less active product 2-oxo-N-arachidonoyl-serotonin. The chain is Cytochrome P450 2U1 (Cyp2u1) from Rattus norvegicus (Rat).